A 144-amino-acid chain; its full sequence is Large ribosomal subunit protein uL11 (144 aa).

Belongs to the universal ribosomal protein uL11 family. In terms of assembly, part of the ribosomal stalk of the 50S ribosomal subunit. Interacts with L10 and the large rRNA to form the base of the stalk. L10 forms an elongated spine to which L12 dimers bind in a sequential fashion forming a multimeric L10(L12)X complex. Post-translationally, one or more lysine residues are methylated.

In terms of biological role, forms part of the ribosomal stalk which helps the ribosome interact with GTP-bound translation factors. The polypeptide is Large ribosomal subunit protein uL11 (Francisella tularensis subsp. holarctica (strain OSU18)).